We begin with the raw amino-acid sequence, 122 residues long: MPTKPARDLQTFPNPKPDRPYEIAMECPEFTCVCPVTGQPDFATIRLRYVPAERCVELKSLKLYLWSFRDEGTFHEAVTNRICDDIVQAIAPRWIEVVGDFAVRGGIHTVVTARHGERPAGV.

C34 acts as the Thioimide intermediate in catalysis. D41 acts as the Proton donor in catalysis. Substrate contacts are provided by residues 56–58 (VEL) and 75–76 (HE).

Belongs to the GTP cyclohydrolase I family. QueF type 1 subfamily.

It is found in the cytoplasm. It carries out the reaction 7-aminomethyl-7-carbaguanine + 2 NADP(+) = 7-cyano-7-deazaguanine + 2 NADPH + 3 H(+). Its pathway is tRNA modification; tRNA-queuosine biosynthesis. In terms of biological role, catalyzes the NADPH-dependent reduction of 7-cyano-7-deazaguanine (preQ0) to 7-aminomethyl-7-deazaguanine (preQ1). The chain is NADPH-dependent 7-cyano-7-deazaguanine reductase from Anaeromyxobacter sp. (strain Fw109-5).